We begin with the raw amino-acid sequence, 122 residues long: Probable transcription factor PqrA (122 aa).

In terms of domain architecture, HTH araC/xylS-type spans 7–107 (NDILKWLETQ…NTTPAKFREN (101 aa)). 2 consecutive DNA-binding regions (H-T-H motif) follow at residues 26–47 (DTIANKSGYSKWHLQRIFKDFK) and 74–97 (ILDIALMYGFSSQATFTRIFKKHF).

Upon expression in E.coli strain KY2563 confers resistance to antibiotics ofloxacin, ciprofloxacin, tetracycline, chloramphenicol, and ceftazidime (increases minimal inhibitory concentration by 8-32 times); also decreases expression of OmpF. The sequence is that of Probable transcription factor PqrA from Proteus vulgaris.